Consider the following 137-residue polypeptide: Large ribosomal subunit protein uL16 (137 aa).

The protein belongs to the universal ribosomal protein uL16 family. Part of the 50S ribosomal subunit.

Binds 23S rRNA and is also seen to make contacts with the A and possibly P site tRNAs. This is Large ribosomal subunit protein uL16 from Tolumonas auensis (strain DSM 9187 / NBRC 110442 / TA 4).